The sequence spans 880 residues: Leucine--tRNA ligase (880 aa).

The 'HIGH' region signature appears at Pro46 to His56. Residues Lys638–Ser642 carry the 'KMSKS' region motif. Lys641 provides a ligand contact to ATP.

It belongs to the class-I aminoacyl-tRNA synthetase family.

The protein localises to the cytoplasm. It catalyses the reaction tRNA(Leu) + L-leucine + ATP = L-leucyl-tRNA(Leu) + AMP + diphosphate. The chain is Leucine--tRNA ligase from Xanthomonas euvesicatoria pv. vesicatoria (strain 85-10) (Xanthomonas campestris pv. vesicatoria).